Reading from the N-terminus, the 260-residue chain is Indole-3-glycerol phosphate synthase (260 aa).

This sequence belongs to the TrpC family.

It catalyses the reaction 1-(2-carboxyphenylamino)-1-deoxy-D-ribulose 5-phosphate + H(+) = (1S,2R)-1-C-(indol-3-yl)glycerol 3-phosphate + CO2 + H2O. It functions in the pathway amino-acid biosynthesis; L-tryptophan biosynthesis; L-tryptophan from chorismate: step 4/5. The sequence is that of Indole-3-glycerol phosphate synthase from Neisseria gonorrhoeae (strain NCCP11945).